The chain runs to 96 residues: uncharacterized protein (96 aa).

An N-terminal signal peptide occupies residues 1 to 28; sequence MNKKAIVGIFMSILMAGLVGCAGSSDAQ.

This is an uncharacterized protein from Butyrivibrio fibrisolvens.